Reading from the N-terminus, the 414-residue chain is Probable protein phosphatase 2C 80 (414 aa).

Residues 174–411 (SCYLPHPEKE…DDITAVVSYV (238 aa)) enclose the PPM-type phosphatase domain. Aspartate 204, glycine 205, aspartate 336, and aspartate 402 together coordinate Mn(2+).

Belongs to the PP2C family. The cofactor is Mg(2+). Mn(2+) serves as cofactor.

The catalysed reaction is O-phospho-L-seryl-[protein] + H2O = L-seryl-[protein] + phosphate. It carries out the reaction O-phospho-L-threonyl-[protein] + H2O = L-threonyl-[protein] + phosphate. This Arabidopsis thaliana (Mouse-ear cress) protein is Probable protein phosphatase 2C 80.